The following is a 772-amino-acid chain: Protein transport protein SEC23 F (772 aa).

Cys65, Cys68, Cys87, and Cys90 together coordinate Zn(2+). Positions 65 to 90 (CKTCKALLNAFARVDFAAMNWVCPFC) are zinc finger-like.

This sequence belongs to the SEC23/SEC24 family. SEC23 subfamily. As to quaternary structure, component of the coat protein complex II (COPII), composed of at least five proteins: the Sec23/24 complex, the Sec13/31 complex and Sar1. Interacts with SEC24A.

It localises to the cytoplasmic vesicle. Its subcellular location is the COPII-coated vesicle membrane. The protein resides in the endoplasmic reticulum membrane. The protein localises to the membrane. In terms of biological role, component of the coat protein complex II (COPII) which promotes the formation of transport vesicles from the endoplasmic reticulum (ER). The coat has two main functions, the physical deformation of the endoplasmic reticulum membrane into vesicles and the selection of cargo molecules. The sequence is that of Protein transport protein SEC23 F from Arabidopsis thaliana (Mouse-ear cress).